The sequence spans 247 residues: ABC-type transporter ATP-binding protein EcsA (247 aa).

The region spanning 4-234 is the ABC transporter domain; the sequence is LSVKDLTGGY…FGMKDAALDD (231 aa). An ATP-binding site is contributed by 36-43; it reads GLNGAGKS.

Belongs to the ABC transporter superfamily.

In terms of biological role, has a role in exoprotein production, sporulation and competence. This Bacillus subtilis (strain 168) protein is ABC-type transporter ATP-binding protein EcsA (ecsA).